Reading from the N-terminus, the 650-residue chain is Protein KINESIN LIGHT CHAIN-RELATED 3 (650 aa).

The segment at 104–141 is disordered; it reads EKQTGKKNVTKSNVGVGGMRKKKVGGTKLQNGNEEPSS. Positions 131–141 are enriched in polar residues; it reads KLQNGNEEPSS. TPR repeat units follow at residues 192–225, 235–268, 277–310, 319–353, 359–392, 401–434, 444–477, 485–518, 527–560, and 569–602; these read IMCLHVTAAVHCKLKEYNEAIPVLQRSVEIPVVE, FAGLMQLGDTYAMVGQLESSISCYTEGLNIQKKV, GETCRYLAEALVQALRFDEAQQVCETALSIHRES, AADRRLMGLICETKGDHENALEHLVLASMAMAANG, AFVDTSIGDSYLSLSRFDEAICAYQKSLTALKTA, GSVYIRLADLYNRTGKVREAKSYCENALRIYESH, ASGLTDISVICESMNEVEQAITLLQKALKIYADS, AGIEAQMGVLYYMMGKYMESYNTFKSAISKLRAT, GIALNQMGLACIQLDAIEEAVELFEEAKCILEQE, and LGLYSNLAGAYDAIGRLDDAIKLLGHVVGVREEK.

The protein belongs to the kinesin light chain family.

This Arabidopsis thaliana (Mouse-ear cress) protein is Protein KINESIN LIGHT CHAIN-RELATED 3.